We begin with the raw amino-acid sequence, 104 residues long: UPF0235 protein M446_3939 (104 aa).

This sequence belongs to the UPF0235 family.

The protein is UPF0235 protein M446_3939 of Methylobacterium sp. (strain 4-46).